Consider the following 338-residue polypeptide: Malate dehydrogenase, mitochondrial (338 aa).

The transit peptide at 1 to 24 (MLSALARPAGAALRRSFSTSAQNN) directs the protein to the mitochondrion. NAD(+)-binding positions include 31 to 37 (GASGGIG) and Asp57. An O-linked (GalNAc...) serine glycan is attached at Ser33. Residues Lys78 and Lys91 each carry the N6-acetyllysine; alternate modification. Lys78 and Lys91 each carry N6-succinyllysine; alternate. 2 residues coordinate substrate: Arg104 and Arg110. Residues Asn117 and 140–142 (ISN) contribute to the NAD(+) site. Asn142 is a binding site for substrate. At Lys165 the chain carries N6-acetyllysine. Asp173 acts as the Proton relay in catalysis. Arg176 contacts substrate. Lys185 bears the N6-acetyllysine; alternate mark. Lys185 carries the N6-succinyllysine; alternate modification. His200 (proton acceptor) is an active-site residue. Lys203 carries the post-translational modification N6-succinyllysine. Residues Lys215 and Lys239 each carry the N6-acetyllysine; alternate modification. 2 positions are modified to N6-succinyllysine; alternate: Lys215 and Lys239. Position 239 is an N6-malonyllysine; alternate (Lys239). The residue at position 246 (Ser246) is a Phosphoserine. Position 251 (Met251) interacts with NAD(+). Residue Lys269 is modified to N6-succinyllysine. An N6-acetyllysine; alternate mark is found at Lys296, Lys301, Lys307, Lys314, and Lys324. Lys296, Lys301, Lys307, Lys314, and Lys324 each carry N6-succinyllysine; alternate. At Lys307 the chain carries N6-malonyllysine; alternate. Ser326 carries the post-translational modification Phosphoserine. Lys328, Lys329, and Lys335 each carry N6-acetyllysine; alternate. Lys328 carries the N6-succinyllysine; alternate modification. Lys329 bears the N6-malonyllysine; alternate mark. Lys335 is modified (N6-succinyllysine; alternate).

It belongs to the LDH/MDH superfamily. MDH type 1 family. In terms of assembly, homodimer. Acetylation is enhanced after treatment either with trichostin A (TSA) or with nicotinamide (NAM) with the appearance of tri- and tetraacetylations. Glucose also increases acetylation. As to expression, ubiquitously expressed. Highly expressed in skeletal muscle and heart. Also expressed in liver, ileum, colon, kidney and adipose tissue, and at very low levels in lung, pancreas, stomach and spleen.

It is found in the mitochondrion matrix. The enzyme catalyses (S)-malate + NAD(+) = oxaloacetate + NADH + H(+). Its activity is regulated as follows. Enzyme activity is enhanced by acetylation. The sequence is that of Malate dehydrogenase, mitochondrial from Felis catus (Cat).